The primary structure comprises 395 residues: Acid ceramidase (395 aa).

An N-terminal signal peptide occupies residues 1 to 21 (MLGRSRLALVLLAAAVSCAVA). A disulfide bridge links cysteine 31 with cysteine 340. The active-site Nucleophile is the cysteine 143. N-linked (GlcNAc...) asparagine glycans are attached at residues asparagine 173, asparagine 195, asparagine 259, asparagine 286, asparagine 342, and asparagine 348. Cysteine 388 and cysteine 392 are disulfide-bonded.

It belongs to the acid ceramidase family. As to quaternary structure, heterodimer; disulfide-linked. The heterodimer is composed of the disulfide-linked alpha and beta chains produced by autocatalytic cleavage of the precursor. In terms of processing, N-glycosylated. Post-translationally, proteolytically cleaved into two chains alpha and beta that remain associated via a disulfide bond. Cleavage gives rise to a conformation change that activates the enzyme. The same catalytic Cys residue mediates the autoproteolytic cleavage and subsequent hydrolysis of lipid substrates. The beta chain may undergo an additional C-terminal processing.

It localises to the lysosome. The protein resides in the secreted. The catalysed reaction is an N-acylsphing-4-enine + H2O = sphing-4-enine + a fatty acid. The enzyme catalyses N-dodecanoylsphing-4-enine + H2O = dodecanoate + sphing-4-enine. It carries out the reaction N-tetradecanoylsphing-4-enine + H2O = tetradecanoate + sphing-4-enine. It catalyses the reaction N-hexadecanoylsphing-4-enine + H2O = sphing-4-enine + hexadecanoate. The catalysed reaction is N-octadecanoylsphing-4-enine + H2O = sphing-4-enine + octadecanoate. The enzyme catalyses N-dodecanoyl-(4R)-hydroxysphinganine + H2O = (4R)-hydroxysphinganine + dodecanoate. It carries out the reaction N-(dodecanoyl)-sphinganine + H2O = dodecanoate + sphinganine. It catalyses the reaction N-(acetyl)-sphing-4-enine + H2O = sphing-4-enine + acetate. The catalysed reaction is N-(hexanoyl)sphing-4-enine + H2O = hexanoate + sphing-4-enine. The enzyme catalyses N-octanoylsphing-4-enine + H2O = octanoate + sphing-4-enine. It carries out the reaction N-(9Z-octadecenoyl)-sphing-4-enine + H2O = sphing-4-enine + (9Z)-octadecenoate. It catalyses the reaction N-dodecanoylethanolamine + H2O = dodecanoate + ethanolamine. It functions in the pathway lipid metabolism; sphingolipid metabolism. In terms of biological role, lysosomal ceramidase that hydrolyzes sphingolipid ceramides into sphingosine and free fatty acids at acidic pH. Ceramides, sphingosine, and its phosphorylated form sphingosine-1-phosphate are bioactive lipids that mediate cellular signaling pathways regulating several biological processes including cell proliferation, apoptosis and differentiation. Has a higher catalytic efficiency towards C12-ceramides versus other ceramides. Also catalyzes the reverse reaction allowing the synthesis of ceramides from fatty acids and sphingosine. For the reverse synthetic reaction, the natural sphingosine D-erythro isomer is more efficiently utilized as a substrate compared to D-erythro-dihydrosphingosine and D-erythro-phytosphingosine, while the fatty acids with chain lengths of 12 or 14 carbons are the most efficiently used. Also has an N-acylethanolamine hydrolase activity. By regulating the levels of ceramides, sphingosine and sphingosine-1-phosphate in the epidermis, mediates the calcium-induced differentiation of epidermal keratinocytes. Also indirectly regulates tumor necrosis factor/TNF-induced apoptosis. By regulating the intracellular balance between ceramides and sphingosine, in adrenocortical cells, probably also acts as a regulator of steroidogenesis. In Macaca fascicularis (Crab-eating macaque), this protein is Acid ceramidase.